The following is a 557-amino-acid chain: Tight junction-associated protein 1 (557 aa).

Residues 1 to 37 form a disordered region; the sequence is MTSAAPAKKPYRKAPPEHRELRLEIPGSRLEQEEPLT. Threonine 2 carries the N-acetylthreonine modification. Positions 14–23 are enriched in basic and acidic residues; sequence APPEHRELRL. The stretch at 42–171 forms a coiled coil; that stretch reads MKLLQEENEE…EELNERYRLD (130 aa). Disordered regions lie at residues 266–303 and 309–328; these read MSEGVPGDPASPPAPGSPTPQPNGECHSLGTARGSPEE and AFEKLNPYPTPSPPHPLYPG. The span at 274 to 286 shows a compositional bias: pro residues; the sequence is PASPPAPGSPTPQ. At serine 300 the chain carries Phosphoserine. Residues 316-325 are compositionally biased toward pro residues; the sequence is YPTPSPPHPL. Position 318 is a phosphothreonine (threonine 318). A phosphoserine mark is found at serine 320 and serine 345. Residues 364–409 are disordered; the sequence is EEGSERARPSPVPSTPASAQASPHHQPSPAPLTLSAPASSASSEED. A compositionally biased stretch (polar residues) spans 378–388; it reads TPASAQASPHH. Residues 394–405 are compositionally biased toward low complexity; the sequence is PLTLSAPASSAS. Threonine 422 bears the Phosphothreonine mark. Positions 439–456 are enriched in basic and acidic residues; that stretch reads LPELQRHFAHSPADRDEV. Positions 439–557 are disordered; sequence LPELQRHFAH…QAQEQGNLLN (119 aa). Serine 491 carries the post-translational modification Phosphoserine. Over residues 530–542 the composition is skewed to basic residues; the sequence is RSPKRMGVHHLHR. Serine 545 bears the Phosphoserine mark. A compositionally biased stretch (polar residues) spans 546-557; it reads LTQAQEQGNLLN.

Interacts with DLG1. Interacts with ARF6 (GTP-bound form). As to expression, ubiquitously expressed.

It is found in the golgi apparatus. It localises to the trans-Golgi network. Its subcellular location is the cell junction. The protein localises to the tight junction. The protein resides in the cell membrane. Functionally, plays a role in regulating the structure of the Golgi apparatus. This Homo sapiens (Human) protein is Tight junction-associated protein 1.